The primary structure comprises 599 residues: MSVDSSSTHRHRSVAARLVRLAAAGAAVIAAVGTAAAWAHAGAVQHRCIHDAMQARVRQSVARHHTAPGAVSAVGLPYVTLDTAAAADRRPGSAPTVVRAANWGALRIAVSTEDLTDPAYHCARVGQHIKRRLGGVDICTAEDILTDEKRDILVKHLIPQALQLHTERLKVRQVQDKWKVTGMGDDVCSDFKVPPAHITDGLSNTDFVMYVASVPSEEGVLAWATTCQVFSDGHPAVGVINIPAANIASRYDQLVTRVVTHEMAHALGFSVGFFEGARILESISNVRHKDFDVPVINSSTAVAKAREQYGCDTLEYLEIEDQGGAGSAGSHIKMRNAQDELMAPAAAAGYYSALTMAIFQDLGFYQADFSKAEVMPWGRNAGCAFLSEKCMERNITKWPAMFCNENEVTMRCPTSRLSLGKCGVTRHPDLPPYWQYFTDPSLAGISAFMDCCPVVEPYGDGSCAQRASEAGAPFKGFNVFSDAARCIDGAFRPKTSHGIIKSYAGLCANVRCDTATRTYSVQVHGGSGYANCTPGLRVELSTVSSAFEEGGYITCPPYVEVCQGNVQAAKDGGNAAAGRRGPRAAATALLVAALLAVAL.

The signal sequence occupies residues 1–39; the sequence is MSVDSSSTHRHRSVAARLVRLAAAGAAVIAAVGTAAAWA. Positions 40 to 97 are cleaved as a propeptide — activation peptide; the sequence is HAGAVQHRCIHDAMQARVRQSVARHHTAPGAVSAVGLPYVTLDTAAAADRRPGSAPTV. Cystine bridges form between Cys-122/Cys-139 and Cys-188/Cys-227. Zn(2+) is bound at residue His-261. Glu-262 is an active-site residue. A Zn(2+)-binding site is contributed by His-265. The N-linked (GlcNAc...) asparagine glycan is linked to Asn-297. 7 disulfides stabilise this stretch: Cys-311–Cys-383, Cys-390–Cys-452, Cys-403–Cys-422, Cys-412–Cys-486, Cys-463–Cys-507, Cys-512–Cys-562, and Cys-532–Cys-555. Residue His-331 coordinates Zn(2+). Asn-394 is a glycosylation site (N-linked (GlcNAc...) asparagine). The GPI-anchor amidated asparagine moiety is linked to residue Asn-574. Positions 575-599 are cleaved as a propeptide — removed in mature form; it reads AAAGRRGPRAAATALLVAALLAVAL.

The protein belongs to the peptidase M8 family. The cofactor is Zn(2+).

The protein resides in the cell membrane. The catalysed reaction is Preference for hydrophobic residues at P1 and P1' and basic residues at P2' and P3'. A model nonapeptide is cleaved at -Ala-Tyr-|-Leu-Lys-Lys-.. Has an integral role during the infection of macrophages in the mammalian host. This chain is Leishmanolysin (gp63), found in Leishmania chagasi.